A 244-amino-acid chain; its full sequence is Inactive chemokine-binding protein (244 aa).

Positions 1 to 79 (MHVPASLQQS…STSVEDVDPP (79 aa)) are disordered. Over residues 37–53 (QDQTPTNDKICQSVTEI) the composition is skewed to polar residues. Positions 54–77 (TESESDPDPEVESEDDSTSVEDVD) are enriched in acidic residues.

The protein belongs to the orthopoxvirus OPG001 family.

It localises to the host cytoplasm. The protein is truncated in this vaccinal strain and presumably inactive, because the lack of signal peptide prevents the protein of being secreted. In the other strains inhibits host immune defense by binding to host chemokines. Binds host CC chemokines (beta chemokines) such as RANTES with high affinity, but not CXC or C chemokines (alpha and gamma chemokines). The chain is Inactive chemokine-binding protein (OPG001) from Vaccinia virus (strain Copenhagen) (VACV).